A 467-amino-acid chain; its full sequence is 3-isopropylmalate dehydratase large subunit (467 aa).

The [4Fe-4S] cluster site is built by Cys347, Cys408, and Cys411.

This sequence belongs to the aconitase/IPM isomerase family. LeuC type 1 subfamily. Heterodimer of LeuC and LeuD. It depends on [4Fe-4S] cluster as a cofactor.

It catalyses the reaction (2R,3S)-3-isopropylmalate = (2S)-2-isopropylmalate. It functions in the pathway amino-acid biosynthesis; L-leucine biosynthesis; L-leucine from 3-methyl-2-oxobutanoate: step 2/4. Catalyzes the isomerization between 2-isopropylmalate and 3-isopropylmalate, via the formation of 2-isopropylmaleate. This is 3-isopropylmalate dehydratase large subunit from Bordetella pertussis (strain Tohama I / ATCC BAA-589 / NCTC 13251).